The following is a 1076-amino-acid chain: Carbamoyl phosphate synthase large chain (1076 aa).

The segment at Met1 to Glu402 is carboxyphosphate synthetic domain. Positions 129, 169, 175, 176, 208, 210, 215, 241, 242, 243, 285, and 299 each coordinate ATP. Positions Lys133 to Val328 constitute an ATP-grasp 1 domain. Mg(2+)-binding residues include Gln285, Glu299, and Asn301. Mn(2+) is bound by residues Gln285, Glu299, and Asn301. Residues Ile403 to Ala555 form an oligomerization domain region. The tract at residues Leu556–Lys939 is carbamoyl phosphate synthetic domain. The ATP-grasp 2 domain occupies Ala680–Met871. 10 residues coordinate ATP: Arg716, Lys755, Leu757, Glu762, Gly787, Val788, His789, Ser790, Gln830, and Glu842. Gln830, Glu842, and Asn844 together coordinate Mg(2+). Residues Gln830, Glu842, and Asn844 each coordinate Mn(2+). The region spanning Met938–Ser1076 is the MGS-like domain. The segment at Leu940–Ser1076 is allosteric domain.

Belongs to the CarB family. Composed of two chains; the small (or glutamine) chain promotes the hydrolysis of glutamine to ammonia, which is used by the large (or ammonia) chain to synthesize carbamoyl phosphate. Tetramer of heterodimers (alpha,beta)4. It depends on Mg(2+) as a cofactor. Mn(2+) serves as cofactor.

The enzyme catalyses hydrogencarbonate + L-glutamine + 2 ATP + H2O = carbamoyl phosphate + L-glutamate + 2 ADP + phosphate + 2 H(+). The catalysed reaction is hydrogencarbonate + NH4(+) + 2 ATP = carbamoyl phosphate + 2 ADP + phosphate + 2 H(+). It functions in the pathway amino-acid biosynthesis; L-arginine biosynthesis; carbamoyl phosphate from bicarbonate: step 1/1. It participates in pyrimidine metabolism; UMP biosynthesis via de novo pathway; (S)-dihydroorotate from bicarbonate: step 1/3. In terms of biological role, large subunit of the glutamine-dependent carbamoyl phosphate synthetase (CPSase). CPSase catalyzes the formation of carbamoyl phosphate from the ammonia moiety of glutamine, carbonate, and phosphate donated by ATP, constituting the first step of 2 biosynthetic pathways, one leading to arginine and/or urea and the other to pyrimidine nucleotides. The large subunit (synthetase) binds the substrates ammonia (free or transferred from glutamine from the small subunit), hydrogencarbonate and ATP and carries out an ATP-coupled ligase reaction, activating hydrogencarbonate by forming carboxy phosphate which reacts with ammonia to form carbamoyl phosphate. This is Carbamoyl phosphate synthase large chain from Archaeoglobus fulgidus (strain ATCC 49558 / DSM 4304 / JCM 9628 / NBRC 100126 / VC-16).